A 373-amino-acid chain; its full sequence is 2-aminoethylphosphonate--pyruvate transaminase (373 aa).

N6-(pyridoxal phosphate)lysine is present on Lys-191.

The protein belongs to the class-V pyridoxal-phosphate-dependent aminotransferase family. PhnW subfamily. Homodimer. It depends on pyridoxal 5'-phosphate as a cofactor.

It carries out the reaction (2-aminoethyl)phosphonate + pyruvate = phosphonoacetaldehyde + L-alanine. Functionally, involved in phosphonate degradation. The protein is 2-aminoethylphosphonate--pyruvate transaminase of Burkholderia ambifaria (strain MC40-6).